Consider the following 372-residue polypeptide: Lysophosphatidic acid receptor 5 (372 aa).

The Extracellular segment spans residues 1–30 (MFANSSANTTSTNSSVLQCPDYRDTHRLHM). N-linked (GlcNAc...) asparagine glycosylation is found at asparagine 4, asparagine 8, and asparagine 13. The chain crosses the membrane as a helical span at residues 31–51 (VVYSLVLATGLPLNALALWVF). Over 52–59 (LRVLRVHS) the chain is Cytoplasmic. Residues 60 to 80 (VVSVYMCNLAASDLLFTLSLP) traverse the membrane as a helical segment. Over 81 to 100 (LRLSYYAQHHWPFPGFLCQT) the chain is Extracellular. The cysteines at positions 98 and 179 are disulfide-linked. Residues 101 to 121 (SGAIFQMNMYGSCLFLMLINV) form a helical membrane-spanning segment. The Cytoplasmic segment spans residues 122 to 140 (DRYAAIVHPLRLRHLRRPR). The helical transmembrane segment at 141-161 (VARRLCLGVWALILLFAVPAA) threads the bilayer. Residues 162 to 191 (RVHSPSHCTYKNITVRLCFESFSDELWKGR) lie on the Extracellular side of the membrane. A glycan (N-linked (GlcNAc...) asparagine) is linked at asparagine 173. The chain crosses the membrane as a helical span at residues 192–212 (LLPLLLLAEILGFLLPLAAVV). At 213-243 (YSSGRVFWTLARPDATQSQRRRKTVRLLLAN) the chain is on the cytoplasmic side. The helical transmembrane segment at 244–264 (LIIFLLCFVPYNSTLAVYGLL) threads the bilayer. At 265–280 (RANLVKNSIQDRDQVR) the chain is on the extracellular side. A helical transmembrane segment spans residues 281–301 (GVLMIMVLLAGANCVLDPLVY). Over 302-372 (YFSAEGFRNT…PDNCSQDSAL (71 aa)) the chain is Cytoplasmic.

The protein belongs to the G-protein coupled receptor 1 family.

The protein localises to the cell membrane. Receptor for lysophosphatidic acid (LPA), a mediator of diverse cellular activities. The protein is Lysophosphatidic acid receptor 5 (Lpar5) of Mus musculus (Mouse).